A 147-amino-acid polypeptide reads, in one-letter code: Effector TSP1 (147 aa).

An N-terminal signal peptide occupies residues 1–19 (MQITKTLVATLFAASTAFA). Disulfide bonds link C44-C51 and C67-C87.

In terms of assembly, homodimer.

It localises to the secreted. Stimulates salicylic acid signaling in host plant roots. This Hypocrea virens (strain Gv29-8 / FGSC 10586) (Gliocladium virens) protein is Effector TSP1.